A 200-amino-acid polypeptide reads, in one-letter code: Peptidyl-tRNA hydrolase (200 aa).

Residue Tyr15 participates in tRNA binding. The active-site Proton acceptor is His20. TRNA-binding residues include Phe66, Asn68, and Asn114.

This sequence belongs to the PTH family. As to quaternary structure, monomer.

It localises to the cytoplasm. It catalyses the reaction an N-acyl-L-alpha-aminoacyl-tRNA + H2O = an N-acyl-L-amino acid + a tRNA + H(+). Functionally, hydrolyzes ribosome-free peptidyl-tRNAs (with 1 or more amino acids incorporated), which drop off the ribosome during protein synthesis, or as a result of ribosome stalling. In terms of biological role, catalyzes the release of premature peptidyl moieties from peptidyl-tRNA molecules trapped in stalled 50S ribosomal subunits, and thus maintains levels of free tRNAs and 50S ribosomes. This Ralstonia pickettii (strain 12J) protein is Peptidyl-tRNA hydrolase.